A 3898-amino-acid chain; its full sequence is MELNHFELLYKTNKQKPMGVEEPVYDVTGRPLFGDPSEVHPQSTLKLPHDRGRGNIKTTLKNLPRRGDCRSGNHLGPVSGIYVKPGPVFYQDYMGPVYHRAPLEFFDEAQFCEVTKRIGRVTGSDGKLYHIYVCIDGCILLKLAKRGEPRTLKWIRNLTDCPLWVTSCSDDGASASKEKKPDRINKGKLKIAPKEHEKDSRTKPPDATIVVEGVKYQVKKKGKVKGKNTQDGLYHNKNKPPESRKKLEKALLAWAVIAIMLYQPVAAENITQWNLRDNGTNGIQHAMYLRGVSRSLHGIWPEKICKGVPTYLATDTELREIQGMMVASEGTNYTCCKLQRHEWNKHGWCNWYNIDPWIQLMNRTQANLAEGPPSKECAVTCRYDKNADINVVTQARNRPTTLTGCKKGTNFSFAGTVIEGPCNFNVSVEDILYGDHECGSLLQDTALYLVDGMTNTIERARQGAARVTSWLGRQLRIAGKRLEGRSKTWFGAYALSPYCNVTTKIGYIWYTNNCTPACLPKNTKIIGPGKFDTNAEDGKILHEMGGHLSEFLLLSLVVLSDFAPETASALYLILHYVIPQSHEEPEGCDTNQLNLTVELRTEDVIPSSVWNVGKYVCVRPDWWPYETKVALLFEEAGQVVKLALRALRDLTRVWNSASTTAFLICLIKVLRGQVVQGVIWLLLVTGAQGRLACKEDHRYAISTTNEIGLHGAEGLTTTWKEYNHNLQLDDGTVKAICMAGSFKVTALNVVSRRYLASLHKDALPTSVTFELLFDGTSPLTEEMGDDFGFGLCPYDTSPVVKGKYNTTLLNGSAFYLVCPIGWTGVIECTAVSPTTLRTEVVKTFRREKPFPYRRDCVTTTVENEDLFYCKWGGNWTCVKGEPVTYTGGPVKQCRWCGFDFNEPDGLPHYPIGKCILANETGYRIVDSTDCNRDGVVISTEGSHECLIGNTTVKVHALDERLGPMPCRPKEIVSSAGPVRKTSCTFNYAKTLRNRYYEPRDSYFQQYMLKGEYQYWFDLDVTDRHSDYFAEFIVLVVVALLGGRYVLWLIVTYIVLTEQLAAGLQLGQGEVVLIGNLITHTDIEVVVYFLLLYLVMRDEPIKKWILLLFHAMTNNPVKTITVALLMVSGVAKGGKIDGGWQRLPETNFDIQLALTVIVVAVMLLAKKDPTTVPLVITVATLRTAKITNGLSTDLAIATVSTALLTWTYISDYYKYKTLLQYLISTVTGIFLIRVLKGVGELDLHTPTLPSYRPLFFILVYLISTAVVTRWNLDIAGLLLQCVPTLLMVFTMWADILTLILILPTYELTKLYYLKEVKIGAERGWLWKTNFKRVNDIYEVDQAGEGVYLFPSKQKTGTITGTMLPLIKAILISCISNKWQFIYLLYLIFEVSYYLHKKIIDEIAGGTNFISRLVAALIEANWAFDNEEVRGLKKFFLLSSRVKELIIKHKVRNEVMVHWFGDEEVYGMPKLVGLVKAATLSKNKHCILCTVCENREWRGETCPKCGRFGPPVTCGMTLADFEEKHYKRIFFREDQSEGPVREEYAGYLQYRARGQLFLRNLPVLATKVKMLLVGNLGTEVGDLEHLGWVLRGPAVCKKVTEHEKCTTSIMDKLTAFFGVMPRGTTPRAPVRFPTSLLKIRRGLETGWAYTHQGGISSVDHVTCGKDLLVCDTMGRTRVVCQSNNKMTDESEYGVKTDSGCPEGARCYVFNREAVNISGTKGAMVHLQKTGGEFTCVTASGTPAFFDLKNLKGWSGLPIFEASSGRVVGRVKVGKNEDSKPTKLMSGIQTVSKSTTDLTEMVKKITTMNRGEFRQITLATGAGKTTELPRSVIEEIGRHKRVLVLIPLRAAAESVYQYMRQKHPSIAFNLRIGEMKEGDMATGITYASYGYFCQMPQPKLRAAMVEYSFIFLDEYHCSTPEQLAIMGKIHRFSENLRVVAMTATPAGTVTTTGQKHPIEEYIAPEVMKGEDLGPEYLDIAGLKIPVEEMKSNMLVFVPTRNMAVETAKKLKAKGYNSGYYYSGEDPSNLRVVTSQSPYVVVATNAIESGVTLPDLDVVVDTGLKCEKRIRLSPKMPFIVTGLKRMAVTIGEQAQRRGRVGRVKPGRYYRSQETPVGSKDYHYDLLQAQRYGIEDGINITKSFREMNYDWSLYEEDSLMITQLEILNNLLISEELPMAVKNIMARTDHPEPIQLAYNSYETQVPVLFPKIKNGEVTDSYDNYTFLNARKLGDDVPPYVYATEDEDLAVELLGLDWPDPGNQGTVEAGRALKQVVGLSTAENALLVALFGYVGYQALSKRHIPVVTDIYSIEDHRLEDTTHLQYAPNAIKTEGKETELKELAQGDVQRCMEAMTNYARDGIQFMKSQALKVKETPTYKETMDTVADYVKKFMEALADSKEDIIKYGLWGTHTALYKSIGARLGNETAFATLVVKWLAFGGESIADHVKQAATDLVVYYIINRPQFPGDTETQQEGRKFVASLLVSALATYTYKSWNYNNLSKIVEPALATLPYAATALKLFAPTRLESVVILSTAIYKTYLSIRRGKSDGLLGTGVSAAMEIMSQNPVSVGIAVMLGVGAVAAHNAIEASEQKRTLLMKVFVKNFLDQAATDELVKESPEKIIMALFEAVQTVGNPLRLVYHVYGVFYKGWEAKELAQRTAGRNLFTLIMFEAVELLGVDSEGKIRQLSSNYILELLYKFRDSIKSSVRQMAISWAPAPFSCDWTPTDDRIGLPQDNFLRVETKCPCGYKMKAVKNCAGELRLLEEEGSFLCRNKFGRGSRNYRVTKYYDDNLSEIKPVIRMEGHVELYYKGATIKLDFNNSKTILATDKWEVDHSTLVRVLKRHTGAGYCGAYLGEKPNHKHLIERDCATITKDKVCFLKMKRGCAFTYDLSLHNLTRLIELVHKNNLEDKEIPAVTVTTWLAYTFVNEDIGTIKPAFGEKITPEMQEEITLQPAVLVDATDVTVTVVGETPTMTTGETPTTFTSSGPDPKGQQVLKLGVGEGQYPGTNPQRASLHEAIQSADERPSVLILGSDKATSNRVKTVKNVKVYRGRDPLEVRDMMRRGKILVIALSRVDNALLKFVDYKGTFLTRETLEALSLGRPKKKNITKAEAQWLLRLEDQMEELPDWFAAGEPIFLEANIKHDRYHLVGDIATIKEKAKQLGATDSTKISKEVGAKVYSMKLSNWVMQEENKQSNLTPLFEELLQQCPPGGQNKTAHMVSAYQLAQGNWMPTSCHVFMGTISARRTKTHPYEAYVKLRELVEEHKMKTLCPGSSLRNDNEWVIGKIKYQGNLRTKHMLNPGKVAEQLHREGHRHNVYNKTIGSVMTATGIRLEKLPVVRAQTDTTNFHQAIRDKIDKEENLQTPGLHKKLMEVFNALKRPELESSYDAVEWEELERGINRKGAAGFFERKNIGEILDSEKIKVEEIIDNLKKGRNIKYYETAIPKNEKRDVNDDWTAGDFVDEKKPRVIQYPEAKTRLAITKVMYKWVKQKPVVIPGYEGKTPLFQIFDKVKKEWDQFQNPVAVSFDTKAWDTQVTTNDLELIKDIQKYYFKKKWHKFIDTLTMHMSEVPVITADGEVYIRKGQRGSGQPDTSAGNSMLNVLTMVYAFCEATGVPYKSFDRVAKIHVCGDDGFLITERALGEKFASKGVQILYEAGKPQKITEGDKMKVAYQFADIEFCSHTPIQVRWSDNTSSYMPGRNTTTILAKMATRLDSSGERGTIAYEKAVAFSFLLMYSWNPLIRRICLLVLSTELQVKPGKSTTYYYEGDPISAYKEVIGHNLFDLKRTSFEKLAKLNLSMSVLGAWTRHTSKRLLQDCVNMGVKEGNWLVNADRLVSSKTGNRYVPGEGHTLQGRHYEELALARKQINSFQGTDRYNLGPIVNMVLRRLRVMMMTLIGRGV.

Residues methionine 1–cysteine 168 enclose the Peptidase C53 domain. Catalysis depends on for N-terminal protease activity residues glutamate 22, histidine 49, and cysteine 69. A zinc-binding TRASH domain region spans residues cysteine 112–cysteine 138. A glycan (N-linked (GlcNAc...) asparagine; by host) is linked at asparagine 157. The interval lysine 221–glutamate 242 is disordered. Asparagine 269, asparagine 278, and asparagine 332 each carry an N-linked (GlcNAc...) asparagine; by host glycan. Disulfide bonds link cysteine 305/cysteine 349 and cysteine 335/cysteine 336. Asparagine 362 and asparagine 367 each carry an N-linked (GlcNAc...) asparagine; by host glycan. Disulfide bonds link cysteine 377–cysteine 422 and cysteine 381–cysteine 405. 4 N-linked (GlcNAc...) asparagine; by host glycosylation sites follow: asparagine 410, asparagine 425, asparagine 500, and asparagine 594. Cysteine 693 and cysteine 737 form a disulfide bridge. Residues asparagine 805, asparagine 810, asparagine 874, asparagine 918, and asparagine 949 are each glycosylated (N-linked (GlcNAc...) asparagine; by host). The next 9 membrane-spanning stretches (helical) occupy residues phenylalanine 1031–threonine 1051, valine 1070–leucine 1090, isoleucine 1104–leucine 1124, glutamine 1140–alanine 1164, leucine 1189–serine 1209, leucine 1217–valine 1237, leucine 1247–threonine 1267, valine 1281–leucine 1301, and threonine 1360–isoleucine 1380. One can recognise a Peptidase C74 domain in the interval lysine 1441–arginine 1589. Active-site for cysteine protease NS2 activity residues include histidine 1447, glutamate 1461, and cysteine 1512. The chain crosses the membrane as a helical span at residues methionine 1568–leucine 1588. The region spanning glycine 1590–arginine 1763 is the Peptidase S31 domain. Catalysis depends on charge relay system; for serine protease NS3 activity residues histidine 1658 and aspartate 1695. Residue asparagine 1713 is glycosylated (N-linked (GlcNAc...) asparagine; by host). The Charge relay system; for serine protease NS3 activity role is filled by serine 1752. A Helicase ATP-binding domain is found at isoleucine 1802 to alanine 1960. Leucine 1815–threonine 1822 is an ATP binding site. The DEAH box signature appears at aspartate 1910–histidine 1913. The Helicase C-terminal domain maps to glycine 1978 to methionine 2179. Asparagine 2134, asparagine 2217, asparagine 2419, asparagine 2494, asparagine 2787, asparagine 2815, and asparagine 2891 each carry an N-linked (GlcNAc...) asparagine; by host glycan. The segment covering proline 2968–threonine 2980 has biased composition (low complexity). The disordered stretch occupies residues proline 2968–lysine 2987. Residues asparagine 3103, asparagine 3211, and asparagine 3316 are each glycosylated (N-linked (GlcNAc...) asparagine; by host). GTP is bound by residues threonine 3500 and leucine 3502. Positions proline 3519–phenylalanine 3642 constitute a RdRp catalytic domain. Asparagine 3689 carries an N-linked (GlcNAc...) asparagine; by host glycan. Arginine 3697 contributes to the GTP binding site. An N-linked (GlcNAc...) asparagine; by host glycan is attached at asparagine 3698. Lysine 3705 lines the GTP pocket. N-linked (GlcNAc...) asparagine; by host glycosylation occurs at asparagine 3794.

It belongs to the pestivirus polyprotein family. In terms of assembly, interacts (via N-terminus) with host SP1; this interaction induces proteasomal degradation of SP1 with subsequent down-regulation of HDAC1 and ISG15 expression thereby counteracting the host innate immunity. Interacts (via C-terminus) with host IRF3. As to quaternary structure, interacts with host OS9. Homodimer; disulfide-linked. Interacts with host RPSA. In terms of assembly, homodimer; disulfide-linked. Heterodimer with E1; disulfide-linked. As to quaternary structure, homodimer; disulfide-linked. Heterodimer with E1; disulfide-linked. Interacts with host TRX2. Interacts with host receptor ADAM17 (via metalloproteinase domain); this interaction allows binding and probably entry of the virus into the host cell. Interacts with host ANXA2; this interaction allows binding and probably entry of the virus into the host cell. Interacts with host MERTK; this interaction allows binding and probably entry of the virus into the host cell. Interacts with host TRAF6; this interaction inhibits host NF-kappa-B pathway. Interacts with NS5B; this interaction enhances RNA-dependent RNA polymerase activity. Interacts with protein NS4A. In terms of assembly, interacts with host RAB5, this interaction facilitates the formation of NS4B-related complex. Interacts with host FTH1; this interaction plays a positive role in viral anti-apoptosis. As to quaternary structure, interacts with RNA-directed RNA polymerase. Interacts with host RSAD2; this interaction inhibits viral replication. Interacts with NS5A; this interaction promotes viral replication. Heavily glycosylated. In terms of processing, the viral RNA of pestiviruses is expressed as a single polyprotein which undergoes post-translational proteolytic processing resulting in the production of at least eleven individual proteins. The N-terminal protease cleaves itself from the nascent polyprotein autocatalytically and thereby generates the N-terminus of the adjacent viral capsid protein C. Post-translationally, cleavage between E2 and p7 is partial.

The protein localises to the virion. The protein resides in the host membrane. It localises to the virion membrane. Its subcellular location is the host cell surface. It is found in the host cytoplasm. It catalyses the reaction Leu is conserved at position P1 for all four cleavage sites. Alanine is found at position P1' of the NS4A-NS4B cleavage site, whereas serine is found at position P1' of the NS3-NS4A, NS4B-NS5A and NS5A-NS5B cleavage sites.. It carries out the reaction RNA(n) + a ribonucleoside 5'-triphosphate = RNA(n+1) + diphosphate. The catalysed reaction is a ribonucleoside 5'-triphosphate + H2O = a ribonucleoside 5'-diphosphate + phosphate + H(+). The enzyme catalyses ATP + H2O = ADP + phosphate + H(+). Its function is as follows. Leader cysteine autoprotease that cleaves itself from the nascent polyprotein during translation of the viral mRNA. Once released, plays a role in the inhibition of host innate immune response by interacting with host IRF3 and inducing its proteasomal degradation. Packages viral RNA to form a viral nucleocapsid and thereby protects viral RNA. Also plays a role in transcription regulation. Protects the incoming virus against IFN-induced effectors. Functionally, plays a role in viral entry. Interacts with host RPSA that acts as a cellular attachment receptor for the virus. Also possesses intrinsic ribonuclease (RNase) activity that can inhibit the production of type I interferon and assist in the development of persistent infections. Cleaves preferentially NpU bonds. Binds to heparan sulfate on the host cells for entry. In terms of biological role, plays a role in cell attachment and subsequent fusion of viral and cellular membranes. Therefore, mediates together with envelope glycoprotein E2 the viral entry. Its function is as follows. Plays a role in cell attachment and subsequent fusion of viral and cellular membranes. Therefore, mediates together with envelope glycoprotein E1 the viral entry. Binds to host ADAM17 receptor for entry. Binds to host ANXA2 for entry. Binds to host MERTK for entry. Plays an essential role in the virus replication cycle by acting as a viroporin. Forms ion conductive pores, which alters the cell permeability allowing the transport of ions and other small molecules. Functionally, autoprotease that associates with the host chaperone JIV and cleaves the NS2-3 protein between NS2 and NS3. Also plays a role in the formation of infectious particles. In terms of biological role, plays a role in the regulation of viral RNA replication. Its function is as follows. Multifunctional protein that contains an N-terminal protease and a C-terminal helicase, playing essential roles in viral polyprotein processing and viral genome replication. The chymotrypsin-like serine protease activity utilizes NS4A as an essential cofactor and catalyzes the cleavage of the polyprotein leading to the release of NS4A, NS4B, NS5A, and NS5B. Plays a role in the inhibition of host NF-kappa-B activation by interacting with and inhibiting host TRAF6. Interacts with NS5B to enhance RNA-dependent RNA polymerase activity. Acts as a cofactor for the NS3 protease activity. Functionally, induces a specific membrane alteration that serves as a scaffold for the virus replication complex. Antagonizes host cell apoptosis by interacting with host ferritin heavy chain. The ORF4 protein physically binds host FTH1/FHC, resulting in the reduction of FTH1 protein levels in host cells. Reduction of FTH1 concentration further inhibits the accumulation of reactive oxygen in host cells, leading to reduced apoptosis. In terms of biological role, regulates viral RNA replication by interacting with the 3'-untranslated region of viral RNA in a dose-dependent manner. At small concentrations promotes viral synthesis by interacting with the polymerase NS5B while at large concentrations, inhibits replication. Its function is as follows. Replicates the viral (+) and (-) genome. The protein is Genome polyprotein of Sus scrofa (Pig).